Consider the following 1364-residue polypeptide: Poly(A) RNA polymerase gld-2 homolog A (1364 aa).

A compositionally biased stretch (low complexity) spans 27 to 51 (NSTNTTASPATTNTINTTTKTITTS). 5 disordered regions span residues 27–97 (NSTN…VVHT), 159–203 (SRPS…EAIT), 315–338 (AVGT…VSST), 417–535 (APAT…STST), and 666–732 (LGLD…LSDA). Over residues 66-91 (LEIEDSGRNEPEDLEHGAAKPLEQRK) the composition is skewed to basic and acidic residues. Low complexity predominate over residues 175 to 198 (GTTVAASTTPSTTVTTSSGSPGSG). The segment covering 417–426 (APATGAASSS) has biased composition (low complexity). Over residues 427–444 (DQNVATKRNHQGAATQNN) the composition is skewed to polar residues. Over residues 445 to 455 (HRNRHNAKKGG) the composition is skewed to basic residues. Low complexity predominate over residues 461–493 (KELTSNSSESLSNSSSKSQLNKRPSSSSSISPI). Basic residues predominate over residues 494-504 (KHPHRNYRNRM). Residues 509–535 (TEPTEQKAATTTVPISNYQPPQQSTST) show a composition bias toward polar residues. 2 residues coordinate Mg(2+): aspartate 993 and aspartate 995. Positions 1163 to 1224 (TLGDLLLSFL…CIEEPFDQTN (62 aa)) constitute a PAP-associated domain.

The protein belongs to the DNA polymerase type-B-like family. GLD2 subfamily. In terms of assembly, interacts with Fmr1 and eIF-4E. The cofactor is Mg(2+). Mn(2+) is required as a cofactor. As to expression, expressed in the brain.

The protein resides in the cytoplasm. It is found in the nucleus. The enzyme catalyses RNA(n) + ATP = RNA(n)-3'-adenine ribonucleotide + diphosphate. Cytoplasmic poly(A) RNA polymerase that adds successive AMP monomers to the 3'-end of specific RNAs, forming a poly(A) tail. In contrast to the canonical nuclear poly(A) RNA polymerase, it only adds poly(A) to selected cytoplasmic mRNAs. Required for formation of long term memory. This Drosophila melanogaster (Fruit fly) protein is Poly(A) RNA polymerase gld-2 homolog A (Gld2).